A 798-amino-acid chain; its full sequence is Phenylalanine--tRNA ligase beta subunit (798 aa).

A tRNA-binding domain is found at 38–148 (IGNYEKVVVG…PEAPVGEKIE (111 aa)). The B5 domain maps to 400–475 (FTPKVIAVSL…RYLGYNNFPD (76 aa)). Positions 453, 459, 462, and 463 each coordinate Mg(2+). The FDX-ACB domain occupies 703–796 (SPYPEVKRDI…LEAKTGAKLR (94 aa)).

The protein belongs to the phenylalanyl-tRNA synthetase beta subunit family. Type 1 subfamily. As to quaternary structure, tetramer of two alpha and two beta subunits. Mg(2+) serves as cofactor.

The protein resides in the cytoplasm. The catalysed reaction is tRNA(Phe) + L-phenylalanine + ATP = L-phenylalanyl-tRNA(Phe) + AMP + diphosphate + H(+). This chain is Phenylalanine--tRNA ligase beta subunit, found in Carboxydothermus hydrogenoformans (strain ATCC BAA-161 / DSM 6008 / Z-2901).